The sequence spans 271 residues: MVTRLSASDASFYQLENTATPMYVGLLLILRRPRAGLSYEALLETVEQRLPQIPRYRQKVQEVKLGLARPVWIDDRDFDITYHVRRSALPSPGSDEQLHELIARLAARPLDKSRPLWEMYLVEGLEKNRIALYTKSHQALINGVTALAIGHVIADRTRRPPAFPEDIWVPERDPGTTRLLLRAVGDWLVRPGAQLQAVGSAVAGLVTNSGQLVETGRKVLDIARTVARGTAPSSPLNATVSRNRRFTVARASLDDYRTVRARYDCDSTTWC.

Belongs to the long-chain O-acyltransferase family.

It catalyses the reaction an acyl-CoA + a 1,2-diacyl-sn-glycerol = a triacyl-sn-glycerol + CoA. The protein operates within glycerolipid metabolism; triacylglycerol biosynthesis. Functionally, catalyzes the terminal and only committed step in triacylglycerol synthesis by using diacylglycerol and fatty acyl CoA as substrates. Required for storage lipid synthesis. The sequence is that of Probable diacyglycerol O-acyltransferase tgs3 (tgs3) from Mycobacterium tuberculosis (strain CDC 1551 / Oshkosh).